The primary structure comprises 213 residues: Thymidylate kinase (213 aa).

Residue 10 to 17 (GLEGAGKT) participates in ATP binding.

Belongs to the thymidylate kinase family.

It catalyses the reaction dTMP + ATP = dTDP + ADP. Phosphorylation of dTMP to form dTDP in both de novo and salvage pathways of dTTP synthesis. The sequence is that of Thymidylate kinase from Salmonella choleraesuis (strain SC-B67).